The primary structure comprises 184 residues: Protein MEH1 (184 aa).

Residue G2 is the site of N-myristoyl glycine attachment. Residues C7 and C8 are each lipidated (S-palmitoyl cysteine). A coiled-coil region spans residues 30 to 71 (QGNANDEYDAEQMRLKEHEHEQKLLAREQELRDIVANTNDKL). Residues 89-147 (LQEALDKRQQEEGGDSREDERSAGDDNLSGHSVPSSGSAQATTHQTAPRTNTFTLLTSP) are disordered. Residues 92 to 112 (ALDKRQQEEGGDSREDERSAG) show a composition bias toward basic and acidic residues. The segment covering 117-147 (SGHSVPSSGSAQATTHQTAPRTNTFTLLTSP) has biased composition (polar residues). A phosphoserine mark is found at S146 and S149.

In terms of assembly, component of the GSE complex composed of GTR1, GTR2, SLM4, MEH1 and LTV1. Component of the EGO complex, at least composed of GTR2, SLM4 and MEH1.

The protein resides in the vacuole membrane. Its function is as follows. Component of the GSE complex, a GTPase complex required for intracellular sorting of GAP1 out of the endosome. Component of the EGO complex, a complex involved in the regulation of microautophagy. The polypeptide is Protein MEH1 (MEH1) (Saccharomyces cerevisiae (strain ATCC 204508 / S288c) (Baker's yeast)).